The following is a 148-amino-acid chain: Transcription antitermination protein NusB (148 aa).

It belongs to the NusB family.

Involved in transcription antitermination. Required for transcription of ribosomal RNA (rRNA) genes. Binds specifically to the boxA antiterminator sequence of the ribosomal RNA (rrn) operons. The polypeptide is Transcription antitermination protein NusB (Saccharopolyspora erythraea (strain ATCC 11635 / DSM 40517 / JCM 4748 / NBRC 13426 / NCIMB 8594 / NRRL 2338)).